The sequence spans 289 residues: Ribosomal RNA small subunit methyltransferase I (289 aa).

The protein belongs to the methyltransferase superfamily. RsmI family.

The protein localises to the cytoplasm. It carries out the reaction cytidine(1402) in 16S rRNA + S-adenosyl-L-methionine = 2'-O-methylcytidine(1402) in 16S rRNA + S-adenosyl-L-homocysteine + H(+). Catalyzes the 2'-O-methylation of the ribose of cytidine 1402 (C1402) in 16S rRNA. In Halalkalibacterium halodurans (strain ATCC BAA-125 / DSM 18197 / FERM 7344 / JCM 9153 / C-125) (Bacillus halodurans), this protein is Ribosomal RNA small subunit methyltransferase I.